Reading from the N-terminus, the 478-residue chain is MAAALFSSNGEEAIGRNIDIGQVDIQSSPEKDLGEFYEIEKTVEFIQRNAAQKVALQFPDDLLLDSVKVARKLEEATGAKTYILGDTSYGSCCVDEVAAEHVKANVLVHYGRACLSPCCRLPVSYVFGRKAVNMDLCAEAFLSHYRDTESHVVVLSDVVYDHALGELAKRIRSAYPNVIFSKLTSCGETASPDEIVKFGRRFSPDLRLWPESYGIFYVGGEGSTLNNLMLTWPRCSFFSFNPFTGEGRTEGLHVNRALMIRFYLIERARDAHVFGILVGTLGVSDYLSALKHLKNIIHLAGKKSYMFSVGKLNPAKLANFPEIDVFVLVACPENSLLDSSEFYKPVVTPDEMEIACNPAREWHGYCITNFRELLPGGSAYVEFPETDPSDAHHTDVSLITGNLRSSHLTVAETLEKDSDTSLVQRNSKTALAQMSSAASYLASRSWQGLDKALGQTPVVKAVEGRKGIAIAYEDEICS.

Positions 93, 114, and 331 each coordinate [4Fe-4S] cluster.

It belongs to the DPH1/DPH2 family. DPH2 subfamily. Component of the 2-(3-amino-3-carboxypropyl)histidine synthase complex composed of dph1, dph2, dph3 and a NADH-dependent reductase. [4Fe-4S] cluster is required as a cofactor.

The protein operates within protein modification; peptidyl-diphthamide biosynthesis. In terms of biological role, required for the first step of diphthamide biosynthesis, a post-translational modification of histidine which occurs in elongation factor 2. Dph1 and dph2 transfer a 3-amino-3-carboxypropyl (ACP) group from S-adenosyl-L-methionine (SAM) to a histidine residue, the reaction is assisted by a reduction system comprising dph3 and a NADH-dependent reductase. Facilitates the reduction of the catalytic iron-sulfur cluster found in the dph1 subunit. In Xenopus laevis (African clawed frog), this protein is 2-(3-amino-3-carboxypropyl)histidine synthase subunit 2 (dph2).